Here is an 89-residue protein sequence, read N- to C-terminus: Small ribosomal subunit protein uS15 (89 aa).

The protein belongs to the universal ribosomal protein uS15 family. In terms of assembly, part of the 30S ribosomal subunit. Forms a bridge to the 50S subunit in the 70S ribosome, contacting the 23S rRNA.

One of the primary rRNA binding proteins, it binds directly to 16S rRNA where it helps nucleate assembly of the platform of the 30S subunit by binding and bridging several RNA helices of the 16S rRNA. Its function is as follows. Forms an intersubunit bridge (bridge B4) with the 23S rRNA of the 50S subunit in the ribosome. In Ligilactobacillus salivarius (strain UCC118) (Lactobacillus salivarius), this protein is Small ribosomal subunit protein uS15.